The sequence spans 254 residues: MGFVYYVTLFVFIDDWVGLQSSAGKLNALLFSLLASLCLFSLSICVLVDPGRVPASYAPDVEDSGWSNSNVTETRKCDKCFAYKPLRTHHCRVCRRCVLKMDHHCLWINNCVGYANYKAFFILVFYATVASIYSTVLLVCCAFKNGDSYAGNVPLKTFIVSCGIFMIGLSITLGTLLCWHIYLITHNMTTIEHYDSKRASWLARKSGQSYRHQFDVGFYKNLTSVLGPNMIKWLCPTFTRNPEDGISFSASRDS.

Transmembrane regions (helical) follow at residues 1–21 (MGFV…GLQS) and 28–48 (ALLF…CVLV). A DHHC domain is found at 75-125 (RKCDKCFAYKPLRTHHCRVCRRCVLKMDHHCLWINNCVGYANYKAFFILVF). Catalysis depends on Cys105, which acts as the S-palmitoyl cysteine intermediate. The next 2 helical transmembrane spans lie at 119–139 (AFFI…VLLV) and 164–184 (IFMI…IYLI).

Belongs to the DHHC palmitoyltransferase family.

It localises to the endoplasmic reticulum membrane. It is found in the cytoplasmic vesicle membrane. It catalyses the reaction L-cysteinyl-[protein] + hexadecanoyl-CoA = S-hexadecanoyl-L-cysteinyl-[protein] + CoA. Palmitoyl acyltransferase. The protein is Probable protein S-acyltransferase 15 (PAT15) of Arabidopsis thaliana (Mouse-ear cress).